The chain runs to 291 residues: 33 kDa chaperonin (291 aa).

2 disulfides stabilise this stretch: cysteine 235/cysteine 237 and cysteine 268/cysteine 271.

The protein belongs to the HSP33 family. In terms of processing, under oxidizing conditions two disulfide bonds are formed involving the reactive cysteines. Under reducing conditions zinc is bound to the reactive cysteines and the protein is inactive.

The protein resides in the cytoplasm. In terms of biological role, redox regulated molecular chaperone. Protects both thermally unfolding and oxidatively damaged proteins from irreversible aggregation. Plays an important role in the bacterial defense system toward oxidative stress. The protein is 33 kDa chaperonin of Streptococcus agalactiae serotype III (strain NEM316).